Consider the following 56-residue polypeptide: MADVSERTLQLSVLVAFASGVLLGWQANRLRRRYLDWRKRRLQDKLAATQKKLDLA.

The Mitochondrial matrix segment spans residues 2 to 9 (ADVSERTL). A helical membrane pass occupies residues 10–27 (QLSVLVAFASGVLLGWQA). Topologically, residues 28–56 (NRLRRRYLDWRKRRLQDKLAATQKKLDLA) are mitochondrial intermembrane.

As to quaternary structure, interacts with mitochondrial trifunctional enzyme, a heterotetrameric complex composed of 2 HADHA subunits and 2 HADHB subunits. Interacts with cytochrome b5 reductase CYB5R3; the interaction is required to maintain cellular lipid composition and leads to stimulation of mitochondrial respiratory complex I activity. Interacts with ATP synthase subunit ATP5F1B/ATP5B.

The protein resides in the mitochondrion inner membrane. In terms of biological role, positively regulates mitochondrial complex assembly and/or stability. Increases mitochondrial membrane potential while decreasing mitochondrial reactive oxygen species. Increases mitochondrial respiration rate. Increased mitochondrial respiratory activity promotes myogenic differentiation which facilitates muscle growth and regeneration. Increases mitochondrial calcium retention capacity. Plays a role in maintenance of cellular lipid composition through its interaction with cytochrome b5 reductase CYB5R3 which is required for mitochondrial respiratory complex I activity. Interacts with the mitochondrial trifunctional enzyme complex (MTE) and enhances fatty acid beta-oxidation. Not required for MTE formation or stability. Modulates triglyceride clearance in adipocytes through its role in regulating fatty acid beta-oxidation and lipolysis. This is Mitoregulin from Homo sapiens (Human).